A 666-amino-acid polypeptide reads, in one-letter code: UvrABC system protein B (666 aa).

Residues Asn-25–Arg-412 form the Helicase ATP-binding domain. An ATP-binding site is contributed by Gly-38–Thr-45. The Beta-hairpin signature appears at Tyr-91–Ile-114. Positions Gln-429–Ile-595 constitute a Helicase C-terminal domain. The 36-residue stretch at Asp-622 to Lys-657 folds into the UVR domain.

Belongs to the UvrB family. In terms of assembly, forms a heterotetramer with UvrA during the search for lesions. Interacts with UvrC in an incision complex.

Its subcellular location is the cytoplasm. Its function is as follows. The UvrABC repair system catalyzes the recognition and processing of DNA lesions. A damage recognition complex composed of 2 UvrA and 2 UvrB subunits scans DNA for abnormalities. Upon binding of the UvrA(2)B(2) complex to a putative damaged site, the DNA wraps around one UvrB monomer. DNA wrap is dependent on ATP binding by UvrB and probably causes local melting of the DNA helix, facilitating insertion of UvrB beta-hairpin between the DNA strands. Then UvrB probes one DNA strand for the presence of a lesion. If a lesion is found the UvrA subunits dissociate and the UvrB-DNA preincision complex is formed. This complex is subsequently bound by UvrC and the second UvrB is released. If no lesion is found, the DNA wraps around the other UvrB subunit that will check the other stand for damage. In Clostridium acetobutylicum (strain ATCC 824 / DSM 792 / JCM 1419 / IAM 19013 / LMG 5710 / NBRC 13948 / NRRL B-527 / VKM B-1787 / 2291 / W), this protein is UvrABC system protein B.